Consider the following 434-residue polypeptide: 3-phosphoshikimate 1-carboxyvinyltransferase (434 aa).

3-phosphoshikimate contacts are provided by lysine 22, serine 23, and arginine 27. Lysine 22 lines the phosphoenolpyruvate pocket. Phosphoenolpyruvate is bound by residues glycine 93 and arginine 121. 3-phosphoshikimate is bound by residues serine 168, serine 169, glutamine 170, serine 199, aspartate 320, and lysine 347. Glutamine 170 is a binding site for phosphoenolpyruvate. Aspartate 320 functions as the Proton acceptor in the catalytic mechanism. Phosphoenolpyruvate contacts are provided by arginine 351, arginine 394, and lysine 419.

This sequence belongs to the EPSP synthase family. Monomer.

The protein localises to the cytoplasm. The catalysed reaction is 3-phosphoshikimate + phosphoenolpyruvate = 5-O-(1-carboxyvinyl)-3-phosphoshikimate + phosphate. It participates in metabolic intermediate biosynthesis; chorismate biosynthesis; chorismate from D-erythrose 4-phosphate and phosphoenolpyruvate: step 6/7. Its function is as follows. Catalyzes the transfer of the enolpyruvyl moiety of phosphoenolpyruvate (PEP) to the 5-hydroxyl of shikimate-3-phosphate (S3P) to produce enolpyruvyl shikimate-3-phosphate and inorganic phosphate. The sequence is that of 3-phosphoshikimate 1-carboxyvinyltransferase from Burkholderia vietnamiensis (strain G4 / LMG 22486) (Burkholderia cepacia (strain R1808)).